The following is an 84-amino-acid chain: Acetylcholine receptor subunit alpha (84 aa).

Disulfide bonds link cysteine 7–cysteine 21 and cysteine 71–cysteine 72. N-linked (GlcNAc...) asparagine glycosylation is present at asparagine 20.

The protein belongs to the ligand-gated ion channel (TC 1.A.9) family. Acetylcholine receptor (TC 1.A.9.1) subfamily. Alpha-1/CHRNA1 sub-subfamily. One of the alpha chains that assemble within the acetylcholine receptor, a pentamer of two alpha chains, a beta, a delta, and a gamma (in immature muscle) or epsilon (in mature muscle) chains. The muscle heteropentamer composed of alpha-1, beta-1, delta, epsilon subunits interacts with the alpha-conotoxin ImII.

Its subcellular location is the postsynaptic cell membrane. The protein localises to the cell membrane. The enzyme catalyses K(+)(in) = K(+)(out). The catalysed reaction is Na(+)(in) = Na(+)(out). Upon acetylcholine binding, the AChR responds by an extensive change in conformation that affects all subunits and leads to opening of an ion-conducting channel across the plasma membrane. This chain is Acetylcholine receptor subunit alpha (CHRNA1), found in Crocidura russula (Greater white-toothed shrew).